Reading from the N-terminus, the 340-residue chain is Probable dual-specificity RNA methyltransferase RlmN (340 aa).

The active-site Proton acceptor is Glu93. The region spanning 99-327 (TAKRLTVCVS…VSVRYSRGLE (229 aa)) is the Radical SAM core domain. A disulfide bridge connects residues Cys106 and Cys332. [4Fe-4S] cluster contacts are provided by Cys113, Cys117, and Cys120. S-adenosyl-L-methionine is bound by residues 160–161 (GE), Ser190, 213–215 (SLH), and Asn289. The active-site S-methylcysteine intermediate is Cys332.

The protein belongs to the radical SAM superfamily. RlmN family. Requires [4Fe-4S] cluster as cofactor.

The protein resides in the cytoplasm. The catalysed reaction is adenosine(2503) in 23S rRNA + 2 reduced [2Fe-2S]-[ferredoxin] + 2 S-adenosyl-L-methionine = 2-methyladenosine(2503) in 23S rRNA + 5'-deoxyadenosine + L-methionine + 2 oxidized [2Fe-2S]-[ferredoxin] + S-adenosyl-L-homocysteine. The enzyme catalyses adenosine(37) in tRNA + 2 reduced [2Fe-2S]-[ferredoxin] + 2 S-adenosyl-L-methionine = 2-methyladenosine(37) in tRNA + 5'-deoxyadenosine + L-methionine + 2 oxidized [2Fe-2S]-[ferredoxin] + S-adenosyl-L-homocysteine. In terms of biological role, specifically methylates position 2 of adenine 2503 in 23S rRNA and position 2 of adenine 37 in tRNAs. This Rippkaea orientalis (strain PCC 8801 / RF-1) (Cyanothece sp. (strain PCC 8801)) protein is Probable dual-specificity RNA methyltransferase RlmN.